Here is a 1390-residue protein sequence, read N- to C-terminus: General transcriptional corepressor trfA (1390 aa).

A disordered region spans residues 53–143 (QQQQQHQQHQ…QQQQQQQQQQ (91 aa)). TPR repeat units follow at residues 171 to 204 (ESIW…NPFS), 206 to 238 (KALT…ESKN), 239 to 272 (GEVW…LPNP), 275 to 308 (PNLW…DNKF), 312 to 345 (TEIY…PPLP), 349 to 382 (SDIW…NATH), 384 to 419 (KVLQ…DSSD), 420 to 453 (AQTW…DGRN), 454 to 487 (PTFW…NPFL), and 489 to 521 (EVWY…DPHN). Disordered regions lie at residues 539–596 (PIGK…NSFV), 632–938 (ERGR…YNNI), and 958–1390 (LDEE…KLER). Positions 540–557 (IGKDGYDLQNGEHGEHGG) are enriched in basic and acidic residues. Positions 582–593 (QNNRNGNNNGNN) are enriched in low complexity. Basic and acidic residues predominate over residues 632–641 (ERGRGEDMHN). A compositionally biased stretch (low complexity) spans 644 to 744 (HSQYSNSMSM…MNDNVNSKNN (101 aa)). Over residues 745-803 (DVLDRRYKGILEREKTSPNGDGRDNRDNIRDNRDNRDSRDGRDNRDGRDSRDRIQEYTR) the composition is skewed to basic and acidic residues. Low complexity predominate over residues 805–846 (YNNNNNNNNSISSINNNNNNNNNNYNNNNNNNNNNNNNNNNN). The span at 857-871 (HNDRRSYERDNKERI) shows a compositional bias: basic and acidic residues. Composition is skewed to low complexity over residues 872–898 (NNNN…NNNN) and 917–937 (NNSN…NYNN). Basic and acidic residues-rich tracts occupy residues 977–993 (KEAE…KERS), 1000–1029 (EKPD…EKES), 1037–1099 (KEIE…EKES), and 1120–1135 (TKKD…EKKL). Over residues 1136–1146 (SSVSPTTTAVE) the composition is skewed to polar residues. Over residues 1147–1169 (QSRDETKELEMDTKEDSEKEKKS) the composition is skewed to basic and acidic residues. Low complexity-rich tracts occupy residues 1170-1180 (STTTTAAASES) and 1192-1203 (TTTTTTTTNTTT). Residues 1206 to 1218 (PTHKDKESSKNDD) are compositionally biased toward basic and acidic residues. The span at 1219 to 1228 (TTTTTTTTTT) shows a compositional bias: low complexity. Positions 1229–1239 (KSAKSPNSSPT) are enriched in polar residues. Residues 1240–1263 (RSDEVVEPHQDASQEEINKRKLED) show a composition bias toward basic and acidic residues. 2 stretches are compositionally biased toward low complexity: residues 1277 to 1289 (STPS…STPS) and 1315 to 1337 (SSSS…TNSS). Over residues 1339–1374 (KNERDRDRERERERERDREREREREREREREREKNK) the composition is skewed to basic and acidic residues.

Belongs to the CYC8/SSN6 family. As to quaternary structure, associates with tupA to form the trfA-tupA corepressor complex.

It is found in the nucleus. Acts as a component of the trfA-tupA corepressor complex which is involved in the repression of many genes in a wide variety of physiological processes. May also be involved in the derepression of at least some target genes. The complex is recruited to target genes by interaction with DNA-bound transcriptional repressors. The complex recruits histone deacetylases to produce a repressive chromatin structure, interacts with hypoacetylated N-terminal tails of histones H3 and H4 that have been programmed for repression by the action of histone deacetylases and interferes directly with the transcriptional machinery by associating with the RNA polymerase II mediator complex. Required for normal growth and for aggregation in early development. Required for a proper chemotactic response to cAMP. This Dictyostelium discoideum (Social amoeba) protein is General transcriptional corepressor trfA (trfA).